Consider the following 352-residue polypeptide: S-adenosylmethionine:tRNA ribosyltransferase-isomerase (352 aa).

Belongs to the QueA family. As to quaternary structure, monomer.

It localises to the cytoplasm. It catalyses the reaction 7-aminomethyl-7-carbaguanosine(34) in tRNA + S-adenosyl-L-methionine = epoxyqueuosine(34) in tRNA + adenine + L-methionine + 2 H(+). Its pathway is tRNA modification; tRNA-queuosine biosynthesis. In terms of biological role, transfers and isomerizes the ribose moiety from AdoMet to the 7-aminomethyl group of 7-deazaguanine (preQ1-tRNA) to give epoxyqueuosine (oQ-tRNA). In Dechloromonas aromatica (strain RCB), this protein is S-adenosylmethionine:tRNA ribosyltransferase-isomerase.